A 503-amino-acid chain; its full sequence is Probable cytosol aminopeptidase (503 aa).

Mn(2+)-binding residues include lysine 270 and aspartate 275. Residue lysine 282 is part of the active site. Aspartate 293, aspartate 352, and glutamate 354 together coordinate Mn(2+). The active site involves arginine 356.

It belongs to the peptidase M17 family. Mn(2+) is required as a cofactor.

It is found in the cytoplasm. It catalyses the reaction Release of an N-terminal amino acid, Xaa-|-Yaa-, in which Xaa is preferably Leu, but may be other amino acids including Pro although not Arg or Lys, and Yaa may be Pro. Amino acid amides and methyl esters are also readily hydrolyzed, but rates on arylamides are exceedingly low.. The catalysed reaction is Release of an N-terminal amino acid, preferentially leucine, but not glutamic or aspartic acids.. Its function is as follows. Presumably involved in the processing and regular turnover of intracellular proteins. Catalyzes the removal of unsubstituted N-terminal amino acids from various peptides. The chain is Probable cytosol aminopeptidase from Shigella flexneri.